The chain runs to 722 residues: Disintegrin and metalloproteinase domain-containing protein 21 (722 aa).

The first 31 residues, 1–31, serve as a signal peptide directing secretion; it reads MAVDGTLVYIRVTLLLLWLGVFLSISGYCQA. Residues 32 to 196 constitute a propeptide that is removed on maturation; that stretch reads GPSQHFTSPE…FEEAENSALE (165 aa). A glycan (N-linked (GlcNAc...) asparagine) is linked at Asn-164. The Cysteine switch motif lies at 171-178; that stretch reads MRCGLTEK. Cys-173 provides a ligand contact to Zn(2+). Topologically, residues 197 to 681 are extracellular; it reads PKSAGDWWTH…DSGPASAKRG (485 aa). One can recognise a Peptidase M12B domain in the interval 208-398; the sequence is WFLELVVVVN…NQGSCLHNPP (191 aa). The N-linked (GlcNAc...) asparagine glycan is linked to Asn-227. 3 cysteine pairs are disulfide-bonded: Cys-316-Cys-393, Cys-356-Cys-378, and Cys-358-Cys-363. A Zn(2+)-binding site is contributed by His-341. Residue Glu-342 is part of the active site. Zn(2+)-binding residues include His-345 and His-351. Residues Asn-377, Asn-437, Asn-478, Asn-546, and Asn-600 are each glycosylated (N-linked (GlcNAc...) asparagine). The region spanning 406–492 is the Disintegrin domain; sequence LKRCGNGVVE…QCPEDRYVQD (87 aa). Cys-464 and Cys-484 form a disulfide bridge. Disulfide bonds link Cys-634–Cys-645, Cys-639–Cys-651, and Cys-653–Cys-662. The EGF-like domain maps to 634–663; the sequence is CLPETCNMKGICNNKHHCHCGYGWSPPYCQ. Residues 682 to 702 form a helical membrane-spanning segment; it reads VFLPLIVIPSLSVLTFLFTVG. The Cytoplasmic portion of the chain corresponds to 703–722; it reads LLMYLRQCSGPKETKAHSSG.

The cofactor is Zn(2+). In terms of processing, has no obvious cleavage site for furin endopeptidase, suggesting that the proteolytic processing is regulated.

It localises to the membrane. Functionally, may be involved in sperm maturation and/or fertilization. May also be involved in epithelia functions associated with establishing and maintaining gradients of ions or nutrients. The sequence is that of Disintegrin and metalloproteinase domain-containing protein 21 (ADAM21) from Homo sapiens (Human).